Reading from the N-terminus, the 101-residue chain is Small ribosomal subunit protein uS14 (101 aa).

This sequence belongs to the universal ribosomal protein uS14 family. In terms of assembly, part of the 30S ribosomal subunit. Contacts proteins S3 and S10.

Binds 16S rRNA, required for the assembly of 30S particles and may also be responsible for determining the conformation of the 16S rRNA at the A site. The protein is Small ribosomal subunit protein uS14 of Paramagnetospirillum magneticum (strain ATCC 700264 / AMB-1) (Magnetospirillum magneticum).